Consider the following 436-residue polypeptide: GDP-mannose 6-dehydrogenase (436 aa).

Residues Tyr-10, Val-11, Asp-30, Lys-35, Thr-86, and Thr-124 each contribute to the NAD(+) site. Positions 161, 210, 214, 217, 225, 256, 257, 259, 262, and 265 each coordinate GDP-alpha-D-mannuronate. Cys-268 serves as the catalytic Nucleophile. Lys-271 contacts NAD(+). The interval 278 to 295 (YRASQLDVEHPMLGSLMR) is inter-domain linker. A GDP-alpha-D-mannuronate-binding site is contributed by Lys-324. Arg-331 is a binding site for NAD(+).

The protein belongs to the UDP-glucose/GDP-mannose dehydrogenase family. In terms of assembly, forms a domain-swapped dimer with each peptide contributing to each active site. The dimers assemble further. X-ray structures indicate this enzyme exists as a homotetramer PubMed:12705829, but kinetic and physical results obtained in PubMed:2470755 and PubMed:12135385 indicate that it is probably a homohexamer.

The enzyme catalyses GDP-alpha-D-mannose + 2 NAD(+) + H2O = GDP-alpha-D-mannuronate + 2 NADH + 3 H(+). Its pathway is glycan biosynthesis; alginate biosynthesis. With respect to regulation, inhibited by GMP, ATP, GDP-D-glucose and maltose. Inhibited by GMP and deamidoNAD. Functionally, catalyzes the oxidation of guanosine diphospho-D-mannose (GDP-D-mannose) to GDP-D-mannuronic acid, a precursor for alginate polymerization. The alginate layer causes a mucoid phenotype and provides a protective barrier against host immune defenses and antibiotics. Other sugars are not used as substrates. This Pseudomonas aeruginosa (strain ATCC 15692 / DSM 22644 / CIP 104116 / JCM 14847 / LMG 12228 / 1C / PRS 101 / PAO1) protein is GDP-mannose 6-dehydrogenase.